The primary structure comprises 171 residues: 3-hydroxydecanoyl-[acyl-carrier-protein] dehydratase (171 aa).

H70 is an active-site residue.

This sequence belongs to the thioester dehydratase family. FabA subfamily. Homodimer.

It is found in the cytoplasm. The catalysed reaction is a (3R)-hydroxyacyl-[ACP] = a (2E)-enoyl-[ACP] + H2O. The enzyme catalyses (3R)-hydroxydecanoyl-[ACP] = (2E)-decenoyl-[ACP] + H2O. It carries out the reaction (2E)-decenoyl-[ACP] = (3Z)-decenoyl-[ACP]. The protein operates within lipid metabolism; fatty acid biosynthesis. Its function is as follows. Necessary for the introduction of cis unsaturation into fatty acids. Catalyzes the dehydration of (3R)-3-hydroxydecanoyl-ACP to E-(2)-decenoyl-ACP and then its isomerization to Z-(3)-decenoyl-ACP. Can catalyze the dehydratase reaction for beta-hydroxyacyl-ACPs with saturated chain lengths up to 16:0, being most active on intermediate chain length. The protein is 3-hydroxydecanoyl-[acyl-carrier-protein] dehydratase of Pseudomonas syringae pv. tomato (strain ATCC BAA-871 / DC3000).